The primary structure comprises 297 residues: Guanylate kinase (297 aa).

The region spanning 4 to 183 is the Guanylate kinase-like domain; sequence GKMIIISGPS…AVAKITDVLH (180 aa). 11-18 lines the ATP pocket; it reads GPSGVGKG. The unknown stretch occupies residues 204-297; sequence EQIVKEKYMY…EQKHYNNDEF (94 aa).

Belongs to the guanylate kinase family.

Its subcellular location is the cytoplasm. The enzyme catalyses GMP + ATP = GDP + ADP. In terms of biological role, essential for recycling GMP and indirectly, cGMP. The protein is Guanylate kinase (gmk) of Mycoplasma mycoides subsp. mycoides SC (strain CCUG 32753 / NCTC 10114 / PG1).